The primary structure comprises 369 residues: Ubiquinone biosynthesis O-methyltransferase, mitochondrial (369 aa).

The N-terminal 85 residues, 1-85 (MWSGRKLGSS…SFRYPWARLY (85 aa)), are a transit peptide targeting the mitochondrion. Arginine 124 contacts S-adenosyl-L-methionine. 2 positions are modified to N6-acetyllysine: lysine 143 and lysine 149. Residues glycine 154 and aspartate 175 each coordinate S-adenosyl-L-methionine. The residue at position 196 (lysine 196) is an N6-acetyllysine. Serine 222 contacts S-adenosyl-L-methionine. Residues glutamate 223, glutamate 226, and histidine 227 each contribute to the Mg(2+) site.

The protein belongs to the class I-like SAM-binding methyltransferase superfamily. UbiG/COQ3 family. In terms of assembly, component of a multi-subunit COQ enzyme complex, composed of at least COQ3, COQ4, COQ5, COQ6, COQ7 and COQ9. It depends on Mg(2+) as a cofactor.

It is found in the mitochondrion inner membrane. The enzyme catalyses 3,4-dihydroxy-5-(all-trans-decaprenyl)benzoate + S-adenosyl-L-methionine = 4-hydroxy-3-methoxy-5-(all-trans-decaprenyl)benzoate + S-adenosyl-L-homocysteine + H(+). It catalyses the reaction a 3-demethylubiquinone + S-adenosyl-L-methionine = a ubiquinone + S-adenosyl-L-homocysteine. It carries out the reaction 3-demethylubiquinol-10 + S-adenosyl-L-methionine = ubiquinol-10 + S-adenosyl-L-homocysteine + H(+). The protein operates within cofactor biosynthesis; ubiquinone biosynthesis. Its function is as follows. O-methyltransferase required for two non-consecutive steps during ubiquinone biosynthesis. Catalyzes the 2 O-methylation of 3,4-dihydroxy-5-(all-trans-decaprenyl)benzoic acid into 4-hydroxy-3-methoxy-5-(all-trans-decaprenyl)benzoic acid. Also catalyzes the last step of ubiquinone biosynthesis by mediating methylation of 3-demethylubiquinone into ubiquinone. Also able to mediate the methylation of 3-demethylubiquinol-10 into ubiquinol-10. The sequence is that of Ubiquinone biosynthesis O-methyltransferase, mitochondrial from Homo sapiens (Human).